We begin with the raw amino-acid sequence, 330 residues long: Methylthioribose-1-phosphate isomerase (330 aa).

Substrate is bound by residues Arg-49–Ala-51, Arg-83, and Gln-179. Asp-220 (proton donor) is an active-site residue. Asn-230 to Lys-231 contributes to the substrate binding site.

The protein belongs to the eIF-2B alpha/beta/delta subunits family. MtnA subfamily.

The enzyme catalyses 5-(methylsulfanyl)-alpha-D-ribose 1-phosphate = 5-(methylsulfanyl)-D-ribulose 1-phosphate. It participates in amino-acid biosynthesis; L-methionine biosynthesis via salvage pathway; L-methionine from S-methyl-5-thio-alpha-D-ribose 1-phosphate: step 1/6. Its function is as follows. Catalyzes the interconversion of methylthioribose-1-phosphate (MTR-1-P) into methylthioribulose-1-phosphate (MTRu-1-P). In Thermus thermophilus (strain ATCC 27634 / DSM 579 / HB8), this protein is Methylthioribose-1-phosphate isomerase.